A 439-amino-acid chain; its full sequence is MGRPQRADKQRRETDGPQKSRPSLTQAQKNSTTIRIHSDDHDQGRPNTNGYARQEQHAWEDASLHSLDFRLCHSSNLEDDEMHGTATDDMIPVNFDFVSPQVPHAMSDLGMYDFGSEATASDLLDPEPCAQFISLASHSAADHVEKATAERPGNDGSSSPSSSLLRTSSSPSQQAVEKLSDLNVQIHRQLTTDHGSLDSAGRRTQLSCAVVSMIEGLKTFRELLFDILSTTSRSPLQAAFRDGQNNGTSRPNTAASQNMQQHRRSGSMLSLSDCDAVSLSNSNSDSRPFQEGSHHFGCLDMSTSLLLLSCYANLILLCREVFAAIRRALPISGHQSTLLELSGFRIGSVAVQEDSDLQITILIQVVVRLIDGIGHCLGYPYSSTTERGEASPSDRGISLELLDLVLGPKGRQGQPSHIGQIEALREDIRNLSKIVYKSI.

A compositionally biased stretch (basic and acidic residues) spans 1–18; sequence MGRPQRADKQRRETDGPQ. Disordered regions lie at residues 1 to 53, 143 to 177, and 239 to 262; these read MGRP…GYAR, HVEK…QAVE, and AFRD…MQQH. The segment covering 20–35 has biased composition (polar residues); that stretch reads SRPSLTQAQKNSTTIR. Basic and acidic residues predominate over residues 143 to 153; the sequence is HVEKATAERPG. A compositionally biased stretch (low complexity) spans 157 to 172; that stretch reads SSSPSSSLLRTSSSPS. Over residues 243–260 the composition is skewed to polar residues; that stretch reads GQNNGTSRPNTAASQNMQ.

The protein resides in the nucleus. Transcription factor; part of the gene cluster that mediates the biosynthesis of pyrrocidines, fungal natural products containing a macrocyclic para-cyclophane connected to a decahydrofluorene ring system that show potent antibiotic activities toward Gram-negative bacteria. This Acremonium sp protein is Transcription factor pydF.